The chain runs to 756 residues: Centromere protein I (756 aa).

The segment at 1–60 is disordered; it reads MSPQKRVKNVQAQNRTSQGSSSFQTTLSAWKVKQDPSNSKNISKHGQNNPVGDYEHADDQ. Composition is skewed to polar residues over residues 10–28 and 35–50; these read VQAQNRTSQGSSSFQTTLS and DPSNSKNISKHGQNNP.

This sequence belongs to the CENP-I/CTF3 family. In terms of assembly, component of the CENPA-CAD complex, composed of CENPI, CENPK, CENPL, CENPO, CENPP, CENPQ, CENPR and CENPS. The CENPA-CAD complex interacts with the CENPA-NAC complex, at least composed of CENPA, CENPC, CENPH, CENPM, CENPN, CENPT and CENPU. Interacts with SENP6. Post-translationally, sumoylated. Sumoylated form can be polyubiquitinated by RNF4, leading to its degradation. Desumoylation by SENP6 prevents its degradation.

It localises to the nucleus. The protein localises to the chromosome. It is found in the centromere. Functionally, component of the CENPA-CAD (nucleosome distal) complex, a complex recruited to centromeres which is involved in assembly of kinetochore proteins, mitotic progression and chromosome segregation. May be involved in incorporation of newly synthesized CENPA into centromeres via its interaction with the CENPA-NAC complex. Required for the localization of CENPF, MAD1L1 and MAD2 (MAD2L1 or MAD2L2) to kinetochores. Involved in the response of gonadal tissues to follicle-stimulating hormone. The polypeptide is Centromere protein I (CENPI) (Homo sapiens (Human)).